The primary structure comprises 185 residues: Ribosome-recycling factor (185 aa).

This sequence belongs to the RRF family.

The protein resides in the cytoplasm. Its function is as follows. Responsible for the release of ribosomes from messenger RNA at the termination of protein biosynthesis. May increase the efficiency of translation by recycling ribosomes from one round of translation to another. The protein is Ribosome-recycling factor of Aromatoleum aromaticum (strain DSM 19018 / LMG 30748 / EbN1) (Azoarcus sp. (strain EbN1)).